A 439-amino-acid polypeptide reads, in one-letter code: MDLVSRIENLPIGKFHYTLLWVVGLGWMFDALDTGIIAFIMTTLVKDWALTPAESGWIVSIGFIGMALGAVFSGGLADRFGRKTVFATTLLIYSLATAACAFAPNLTWLLAFRFIVGLGLGGQLPVAVTLVSEYIPAHVRGRFIVLLESFWGLGWLVAALVSYFVIPHFGWHIAFLIGGLPAIYVYVIIKKVPESIPYLINRGRIDEAHELVQQIERHAGVPVIDTIVVKPVAQKQQVSFRQLWSGRFARRSLMLWLVWFGIVFSYYGIFTWLPSLLVKQGYSVVQSFEYVLIMILAQLPGYISAAWLVERLGRKATLAGFIGACAISAYFFGQADTVFNIMVWGCLLSFFNLGAWGVLYTYTPEQYPANIRAFGAGWASAVGRMGGIAAPIVVTHMMVAHDGFHQVFMMFTLVLLAVAAVIVILGEETQGKTLESIGL.

12 consecutive transmembrane segments (helical) span residues Leu20–Ile40, Trp57–Ala77, Thr84–Pro104, Trp108–Val128, Phe143–Tyr163, Phe169–Ile189, Leu253–Leu273, Phe288–Leu308, Ala316–Asp336, Val338–Val358, Phe374–Val394, and Val407–Glu427.

It belongs to the major facilitator superfamily. Sugar transporter (TC 2.A.1.1) family.

Its subcellular location is the cell inner membrane. In terms of biological role, functions as a high-affinity transporter of niacin (nicotinamide or nicotinate). Probably substantially contributes to niacin transport when its concentration in the medium is very low. This Acinetobacter baylyi (strain ATCC 33305 / BD413 / ADP1) protein is Niacin transporter NiaP.